We begin with the raw amino-acid sequence, 873 residues long: DNA mismatch repair protein MutS (873 aa).

ATP is bound at residue 620–627 (GPNMAGKS).

It belongs to the DNA mismatch repair MutS family.

Functionally, this protein is involved in the repair of mismatches in DNA. It is possible that it carries out the mismatch recognition step. This protein has a weak ATPase activity. The sequence is that of DNA mismatch repair protein MutS from Ruminiclostridium cellulolyticum (strain ATCC 35319 / DSM 5812 / JCM 6584 / H10) (Clostridium cellulolyticum).